Reading from the N-terminus, the 206-residue chain is MARYLGPKLKLSRREGTDLFLKSGVRAIDTKCKIDTAPGQHGARKPRLSDYGSQLREKQKVRRIYGILERQFRNYYKEANRLKGNTGENLLVLLEGRLDNVVYRMGFAATRAEARQLVSHKAIVVNGRVVNIPSFQVSVNDVVAVREKSKKQARIKASLELAEQRERPTWLEVEAAKMEGVFKRVPERSDLSADINEHLIVELYSK.

The S4 RNA-binding domain occupies 96–156 (GRLDNVVYRM…EKSKKQARIK (61 aa)).

This sequence belongs to the universal ribosomal protein uS4 family. Part of the 30S ribosomal subunit. Contacts protein S5. The interaction surface between S4 and S5 is involved in control of translational fidelity.

Functionally, one of the primary rRNA binding proteins, it binds directly to 16S rRNA where it nucleates assembly of the body of the 30S subunit. Its function is as follows. With S5 and S12 plays an important role in translational accuracy. The sequence is that of Small ribosomal subunit protein uS4 from Histophilus somni (strain 129Pt) (Haemophilus somnus).